We begin with the raw amino-acid sequence, 61 residues long: MDIKQLREKSADELKAHLTDLRKEQFSLRMQQVTGQLPKTHETRRVRREIARVKHLLGSTQ.

Belongs to the universal ribosomal protein uL29 family.

This chain is Large ribosomal subunit protein uL29, found in Xanthomonas campestris pv. campestris (strain 8004).